Here is a 174-residue protein sequence, read N- to C-terminus: Protein GrpE (174 aa).

Residues 1–35 are disordered; that stretch reads MAQDIKNEEVEEVQEEEVVETAEETTPEKSELDLA. A compositionally biased stretch (acidic residues) spans 9–25; that stretch reads EVEEVQEEEVVETAEET. A compositionally biased stretch (basic and acidic residues) spans 26 to 35; sequence TPEKSELDLA.

The protein belongs to the GrpE family. Homodimer.

Its subcellular location is the cytoplasm. Participates actively in the response to hyperosmotic and heat shock by preventing the aggregation of stress-denatured proteins, in association with DnaK and GrpE. It is the nucleotide exchange factor for DnaK and may function as a thermosensor. Unfolded proteins bind initially to DnaJ; upon interaction with the DnaJ-bound protein, DnaK hydrolyzes its bound ATP, resulting in the formation of a stable complex. GrpE releases ADP from DnaK; ATP binding to DnaK triggers the release of the substrate protein, thus completing the reaction cycle. Several rounds of ATP-dependent interactions between DnaJ, DnaK and GrpE are required for fully efficient folding. The sequence is that of Protein GrpE from Streptococcus pneumoniae (strain ATCC BAA-255 / R6).